We begin with the raw amino-acid sequence, 155 residues long: Endoribonuclease YbeY (155 aa).

Zn(2+) is bound by residues His114, His118, and His124.

The protein belongs to the endoribonuclease YbeY family. Zn(2+) is required as a cofactor.

It localises to the cytoplasm. In terms of biological role, single strand-specific metallo-endoribonuclease involved in late-stage 70S ribosome quality control and in maturation of the 3' terminus of the 16S rRNA. In Escherichia coli O157:H7, this protein is Endoribonuclease YbeY.